The sequence spans 495 residues: UPF0371 protein cgR_2887 (495 aa).

This sequence belongs to the UPF0371 family.

In Corynebacterium glutamicum (strain R), this protein is UPF0371 protein cgR_2887.